We begin with the raw amino-acid sequence, 492 residues long: Protein KOKOPELLI (492 aa).

Disordered stretches follow at residues 218–354 (VTSP…RNVM) and 394–426 (SKFHHKHQEKSKERKRPMSESKGLTTHKQQHQG). Acidic residues predominate over residues 256 to 270 (QETETFDDDSSETEA). Positions 287–305 (STSQEYSGETGSSSGSEWE) are enriched in low complexity. Polar residues predominate over residues 317 to 336 (ESSYPPQNDDSVSEVSTSPP). Composition is skewed to basic and acidic residues over residues 337–348 (HTDRDTSREPGK) and 403–412 (KSKERKRPMS).

In terms of tissue distribution, mostly expressed in pollen and open flowers and, to a lower extent, in closed flowers.

Positively regulates reproductive function by facilitating male gametophyte formation and double fertilization. The chain is Protein KOKOPELLI from Arabidopsis thaliana (Mouse-ear cress).